Here is a 269-residue protein sequence, read N- to C-terminus: Hydroxyethylthiazole kinase (269 aa).

Methionine 46 is a binding site for substrate. ATP-binding residues include arginine 121 and threonine 166. Glycine 193 is a binding site for substrate.

This sequence belongs to the Thz kinase family. Mg(2+) is required as a cofactor.

It catalyses the reaction 5-(2-hydroxyethyl)-4-methylthiazole + ATP = 4-methyl-5-(2-phosphooxyethyl)-thiazole + ADP + H(+). The protein operates within cofactor biosynthesis; thiamine diphosphate biosynthesis; 4-methyl-5-(2-phosphoethyl)-thiazole from 5-(2-hydroxyethyl)-4-methylthiazole: step 1/1. Its function is as follows. Catalyzes the phosphorylation of the hydroxyl group of 4-methyl-5-beta-hydroxyethylthiazole (THZ). This Limosilactobacillus reuteri (strain DSM 20016) (Lactobacillus reuteri) protein is Hydroxyethylthiazole kinase.